We begin with the raw amino-acid sequence, 128 residues long: MQRNMLKSKIHRAVVTHCELHYEGSCAIDENLLEAANIVENERIDIWNINNGERFSTYAIKGERGSGMISLNGSAARRAQLGDLVIIAAFANVDEEELKAGWKPDLVFVDDKNAIKGSRDHVPTQSWT.

The active-site Schiff-base intermediate with substrate; via pyruvic acid is the Ser25. Ser25 carries the pyruvic acid (Ser) modification. Position 57 (Thr57) interacts with substrate. Catalysis depends on Tyr58, which acts as the Proton donor. 73–75 (GSA) serves as a coordination point for substrate.

This sequence belongs to the PanD family. Heterooctamer of four alpha and four beta subunits. It depends on pyruvate as a cofactor. In terms of processing, is synthesized initially as an inactive proenzyme, which is activated by self-cleavage at a specific serine bond to produce a beta-subunit with a hydroxyl group at its C-terminus and an alpha-subunit with a pyruvoyl group at its N-terminus.

Its subcellular location is the cytoplasm. It carries out the reaction L-aspartate + H(+) = beta-alanine + CO2. Its pathway is cofactor biosynthesis; (R)-pantothenate biosynthesis; beta-alanine from L-aspartate: step 1/1. Catalyzes the pyruvoyl-dependent decarboxylation of aspartate to produce beta-alanine. The protein is Aspartate 1-decarboxylase of Paraburkholderia phymatum (strain DSM 17167 / CIP 108236 / LMG 21445 / STM815) (Burkholderia phymatum).